The chain runs to 504 residues: Glutamate--tRNA ligase (504 aa).

Positions 25 to 35 (PSPTGNPHVGL) match the 'HIGH' region motif. Zn(2+) is bound by residues C122, C124, C149, and D151. The short motif at 270–274 (KLSKR) is the 'KMSKS' region element. Position 273 (K273) interacts with ATP.

The protein belongs to the class-I aminoacyl-tRNA synthetase family. Glutamate--tRNA ligase type 1 subfamily. In terms of assembly, monomer. It depends on Zn(2+) as a cofactor.

The protein resides in the cytoplasm. The catalysed reaction is tRNA(Glu) + L-glutamate + ATP = L-glutamyl-tRNA(Glu) + AMP + diphosphate. In terms of biological role, catalyzes the attachment of glutamate to tRNA(Glu) in a two-step reaction: glutamate is first activated by ATP to form Glu-AMP and then transferred to the acceptor end of tRNA(Glu). The chain is Glutamate--tRNA ligase from Streptomyces griseus subsp. griseus (strain JCM 4626 / CBS 651.72 / NBRC 13350 / KCC S-0626 / ISP 5235).